The chain runs to 58 residues: MSNTLKITLVKSLIGTPKQQRNVVAGLGLKKLNTTVVRSDTPEIRGMINKISHMLHIA.

It belongs to the universal ribosomal protein uL30 family. Part of the 50S ribosomal subunit.

The polypeptide is Large ribosomal subunit protein uL30 (Pelobacter propionicus (strain DSM 2379 / NBRC 103807 / OttBd1)).